A 488-amino-acid chain; its full sequence is 3-octaprenyl-4-hydroxybenzoate carboxy-lyase (488 aa).

Mn(2+) is bound at residue N172. Prenylated FMN contacts are provided by residues 175 to 177 (IYR), 189 to 191 (RWL), and 194 to 195 (RG). E238 is a binding site for Mn(2+). D287 functions as the Proton donor in the catalytic mechanism.

This sequence belongs to the UbiD family. As to quaternary structure, homohexamer. Requires prenylated FMN as cofactor. Mn(2+) serves as cofactor.

Its subcellular location is the cell membrane. It catalyses the reaction a 4-hydroxy-3-(all-trans-polyprenyl)benzoate + H(+) = a 2-(all-trans-polyprenyl)phenol + CO2. It participates in cofactor biosynthesis; ubiquinone biosynthesis. Functionally, catalyzes the decarboxylation of 3-octaprenyl-4-hydroxy benzoate to 2-octaprenylphenol, an intermediate step in ubiquinone biosynthesis. This Shewanella oneidensis (strain ATCC 700550 / JCM 31522 / CIP 106686 / LMG 19005 / NCIMB 14063 / MR-1) protein is 3-octaprenyl-4-hydroxybenzoate carboxy-lyase.